The following is a 334-amino-acid chain: Ketol-acid reductoisomerase (NADP(+)) (334 aa).

In terms of domain architecture, KARI N-terminal Rossmann spans Pro2–Thr182. NADP(+)-binding positions include Tyr25–Gln28, Ser51, Ser53, and Asp83–Gln86. His108 is an active-site residue. NADP(+) is bound at residue Gly134. The KARI C-terminal knotted domain maps to Thr183 to Ile328. Mg(2+)-binding residues include Asp191, Glu195, Glu227, and Glu231. Residue Ser252 participates in substrate binding.

This sequence belongs to the ketol-acid reductoisomerase family. Requires Mg(2+) as cofactor.

The catalysed reaction is (2R)-2,3-dihydroxy-3-methylbutanoate + NADP(+) = (2S)-2-acetolactate + NADPH + H(+). It catalyses the reaction (2R,3R)-2,3-dihydroxy-3-methylpentanoate + NADP(+) = (S)-2-ethyl-2-hydroxy-3-oxobutanoate + NADPH + H(+). It functions in the pathway amino-acid biosynthesis; L-isoleucine biosynthesis; L-isoleucine from 2-oxobutanoate: step 2/4. It participates in amino-acid biosynthesis; L-valine biosynthesis; L-valine from pyruvate: step 2/4. Involved in the biosynthesis of branched-chain amino acids (BCAA). Catalyzes an alkyl-migration followed by a ketol-acid reduction of (S)-2-acetolactate (S2AL) to yield (R)-2,3-dihydroxy-isovalerate. In the isomerase reaction, S2AL is rearranged via a Mg-dependent methyl migration to produce 3-hydroxy-3-methyl-2-ketobutyrate (HMKB). In the reductase reaction, this 2-ketoacid undergoes a metal-dependent reduction by NADPH to yield (R)-2,3-dihydroxy-isovalerate. The protein is Ketol-acid reductoisomerase (NADP(+)) of Clostridium beijerinckii (strain ATCC 51743 / NCIMB 8052) (Clostridium acetobutylicum).